Consider the following 187-residue polypeptide: Ribosome-recycling factor (187 aa).

The protein belongs to the RRF family.

The protein resides in the cytoplasm. Responsible for the release of ribosomes from messenger RNA at the termination of protein biosynthesis. May increase the efficiency of translation by recycling ribosomes from one round of translation to another. The polypeptide is Ribosome-recycling factor (Parvibaculum lavamentivorans (strain DS-1 / DSM 13023 / NCIMB 13966)).